The following is a 577-amino-acid chain: Arginine--tRNA ligase (577 aa).

The 'HIGH' region signature appears at 122–132 (PNVAKEMHVGH).

Belongs to the class-I aminoacyl-tRNA synthetase family. As to quaternary structure, monomer.

It localises to the cytoplasm. The enzyme catalyses tRNA(Arg) + L-arginine + ATP = L-arginyl-tRNA(Arg) + AMP + diphosphate. The chain is Arginine--tRNA ligase from Aliivibrio fischeri (strain MJ11) (Vibrio fischeri).